A 107-amino-acid polypeptide reads, in one-letter code: Large ribosomal subunit protein mL55 (107 aa).

The transit peptide at 1 to 16 (MLLKQLPQAVQQIRCI) directs the protein to the mitochondrion.

Belongs to the mitochondrion-specific ribosomal protein mL55 family. In terms of assembly, component of the mitochondrial ribosome large subunit (39S) which comprises a 16S rRNA and about 50 distinct proteins. As to expression, ubiquitously expressed (at protein level).

The protein localises to the mitochondrion. Functionally, involved in mitochondrial biogenesis and G2/M phase cell cycle progression. The protein is Large ribosomal subunit protein mL55 (mRpL55) of Drosophila melanogaster (Fruit fly).